A 285-amino-acid chain; its full sequence is GTP-binding protein 8 (285 aa).

The 174-residue stretch at 110–283 (QQPEVCFIGR…KCFIADITGS (174 aa)) folds into the EngB-type G domain. GTP is bound by residues 118–125 (GRSNVGKS), 147–151 (GHTKK), 165–168 (DMPG), 227–230 (TKID), and 262–264 (ISA). Positions 125 and 149 each coordinate Mg(2+).

The protein belongs to the TRAFAC class TrmE-Era-EngA-EngB-Septin-like GTPase superfamily. EngB GTPase family. Mg(2+) serves as cofactor.

This chain is GTP-binding protein 8 (Gtpbp8), found in Mus musculus (Mouse).